Here is a 435-residue protein sequence, read N- to C-terminus: 3-phosphoshikimate 1-carboxyvinyltransferase (435 aa).

The 3-phosphoshikimate site is built by K23, S24, and R28. K23 contacts phosphoenolpyruvate. Phosphoenolpyruvate-binding residues include G97 and R125. The 3-phosphoshikimate site is built by S170, S171, Q172, S198, D315, N338, and K342. Q172 serves as a coordination point for phosphoenolpyruvate. Residue D315 is the Proton acceptor of the active site. Residues R346, R388, and K413 each contribute to the phosphoenolpyruvate site.

It belongs to the EPSP synthase family. As to quaternary structure, monomer.

It localises to the cytoplasm. It carries out the reaction 3-phosphoshikimate + phosphoenolpyruvate = 5-O-(1-carboxyvinyl)-3-phosphoshikimate + phosphate. The protein operates within metabolic intermediate biosynthesis; chorismate biosynthesis; chorismate from D-erythrose 4-phosphate and phosphoenolpyruvate: step 6/7. Functionally, catalyzes the transfer of the enolpyruvyl moiety of phosphoenolpyruvate (PEP) to the 5-hydroxyl of shikimate-3-phosphate (S3P) to produce enolpyruvyl shikimate-3-phosphate and inorganic phosphate. In Buchnera aphidicola subsp. Cinara cedri (strain Cc), this protein is 3-phosphoshikimate 1-carboxyvinyltransferase.